A 302-amino-acid polypeptide reads, in one-letter code: Sulfate adenylyltransferase subunit 2 (302 aa).

This sequence belongs to the PAPS reductase family. CysD subfamily. As to quaternary structure, heterodimer composed of CysD, the smaller subunit, and CysN.

It carries out the reaction sulfate + ATP + H(+) = adenosine 5'-phosphosulfate + diphosphate. It functions in the pathway sulfur metabolism; hydrogen sulfide biosynthesis; sulfite from sulfate: step 1/3. With CysN forms the ATP sulfurylase (ATPS) that catalyzes the adenylation of sulfate producing adenosine 5'-phosphosulfate (APS) and diphosphate, the first enzymatic step in sulfur assimilation pathway. APS synthesis involves the formation of a high-energy phosphoric-sulfuric acid anhydride bond driven by GTP hydrolysis by CysN coupled to ATP hydrolysis by CysD. The sequence is that of Sulfate adenylyltransferase subunit 2 from Shewanella pealeana (strain ATCC 700345 / ANG-SQ1).